Reading from the N-terminus, the 148-residue chain is Large ribosomal subunit protein bL9 (148 aa).

This sequence belongs to the bacterial ribosomal protein bL9 family.

Its function is as follows. Binds to the 23S rRNA. The polypeptide is Large ribosomal subunit protein bL9 (Geobacter sulfurreducens (strain ATCC 51573 / DSM 12127 / PCA)).